The chain runs to 147 residues: Nucleoside diphosphate kinase (147 aa).

ATP contacts are provided by K11, F59, R87, T93, R104, and N114. Residue H117 is the Pros-phosphohistidine intermediate of the active site.

The protein belongs to the NDK family. Homotetramer. It depends on Mg(2+) as a cofactor.

Its subcellular location is the cytoplasm. The enzyme catalyses a 2'-deoxyribonucleoside 5'-diphosphate + ATP = a 2'-deoxyribonucleoside 5'-triphosphate + ADP. The catalysed reaction is a ribonucleoside 5'-diphosphate + ATP = a ribonucleoside 5'-triphosphate + ADP. Its function is as follows. Major role in the synthesis of nucleoside triphosphates other than ATP. The ATP gamma phosphate is transferred to the NDP beta phosphate via a ping-pong mechanism, using a phosphorylated active-site intermediate. The polypeptide is Nucleoside diphosphate kinase (Anaeromyxobacter sp. (strain K)).